A 1946-amino-acid polypeptide reads, in one-letter code: Integrin beta-like protein E (1946 aa).

A signal peptide spans 1–22; that stretch reads MNNLFKFLFVLLAIFCPPISDL. Residues 23 to 1875 lie on the Extracellular side of the membrane; sequence VVSHGVPQQH…ATTQTTNNKT (1853 aa). N-linked (GlcNAc...) asparagine glycans are attached at residues Asn-107, Asn-134, and Asn-203. In terms of domain architecture, EGF-like spans 423 to 460; sequence YGQNCDPTPPCDKGIPNEGILGDGKCMCINGYSGDKCD. Disulfide bonds link Cys-433–Cys-448 and Cys-450–Cys-459. The region spanning 514–699 is the VWFA domain; it reads DVFVLVDVNV…AGLKSVLSNV (186 aa). N-linked (GlcNAc...) asparagine glycans are attached at residues Asn-705, Asn-860, Asn-1043, Asn-1113, Asn-1177, Asn-1374, Asn-1401, Asn-1513, Asn-1611, Asn-1620, Asn-1662, Asn-1671, Asn-1737, Asn-1743, Asn-1762, Asn-1812, Asn-1852, and Asn-1873. A helical membrane pass occupies residues 1876-1896; the sequence is VLTGAIAGAAAGTALIAAAAW. At 1897–1946 the chain is on the cytoplasmic side; the sequence is KLLRKAAPPTDTFFSEAAFLGDGVNANPLYEQSASAAENPLYQSASDNTD.

This sequence belongs to the SIB family. Interacts with talA/talin.

It is found in the membrane. Functionally, implicated in cellular adhesion. This Dictyostelium discoideum (Social amoeba) protein is Integrin beta-like protein E (sibE).